The chain runs to 354 residues: Histidinol-phosphate aminotransferase (354 aa).

The residue at position 210 (Lys210) is an N6-(pyridoxal phosphate)lysine.

This sequence belongs to the class-II pyridoxal-phosphate-dependent aminotransferase family. Histidinol-phosphate aminotransferase subfamily. In terms of assembly, homodimer. It depends on pyridoxal 5'-phosphate as a cofactor.

The enzyme catalyses L-histidinol phosphate + 2-oxoglutarate = 3-(imidazol-4-yl)-2-oxopropyl phosphate + L-glutamate. It functions in the pathway amino-acid biosynthesis; L-histidine biosynthesis; L-histidine from 5-phospho-alpha-D-ribose 1-diphosphate: step 7/9. This Clostridium botulinum (strain Okra / Type B1) protein is Histidinol-phosphate aminotransferase.